The chain runs to 82 residues: Large ribosomal subunit protein uL23 (82 aa).

The protein belongs to the universal ribosomal protein uL23 family. As to quaternary structure, part of the 50S ribosomal subunit. Contacts protein L29.

Its function is as follows. Binds to 23S rRNA. One of the proteins that surrounds the polypeptide exit tunnel on the outside of the ribosome. This chain is Large ribosomal subunit protein uL23, found in Methanosarcina acetivorans (strain ATCC 35395 / DSM 2834 / JCM 12185 / C2A).